A 353-amino-acid chain; its full sequence is MAMTLLEDWCRGMDVNSQRALLVWGIPVNCDEAEIEETLQAAMPQVHYRVLGRMFWREENAKAALLELTGTVDYAAIPREMPGKGGVWKVVFKPPTSDAEFLERLHLFLAREGWTVQDVARVLGFENSSPAPGPDMPAEMLNYILDNVIKPLIESIWYKKLTLFSGRDIPGPGEETFEPWLEHANEVIEEWQVSDIEKRRRLMESLRGPAADVIRILKTNNPDITTAECLKALEQVFGSVESSRDVQVRFLNTYQNPGEKLSAYVIRLEPLLQKVVEKGAIDKENVNQARLEQVIAGANHSGAIRRQLWLTGAAEGPAPNLFQLLVQIREEEAKEEEAAAEAALLQLGLEGHF.

This sequence belongs to the PNMA family.

The protein localises to the nucleus. It localises to the nucleolus. In Bos taurus (Bovine), this protein is Paraneoplastic antigen Ma1 homolog (PNMA1).